We begin with the raw amino-acid sequence, 206 residues long: Small ribosomal subunit protein uS4 (206 aa).

An S4 RNA-binding domain is found at 96–156 (GRLDNVVYRM…EKAKKQSRVK (61 aa)).

This sequence belongs to the universal ribosomal protein uS4 family. As to quaternary structure, part of the 30S ribosomal subunit. Contacts protein S5. The interaction surface between S4 and S5 is involved in control of translational fidelity.

Functionally, one of the primary rRNA binding proteins, it binds directly to 16S rRNA where it nucleates assembly of the body of the 30S subunit. Its function is as follows. With S5 and S12 plays an important role in translational accuracy. In Salmonella agona (strain SL483), this protein is Small ribosomal subunit protein uS4.